Consider the following 289-residue polypeptide: Urease accessory protein UreD (289 aa).

Belongs to the UreD family. In terms of assembly, ureD, UreF and UreG form a complex that acts as a GTP-hydrolysis-dependent molecular chaperone, activating the urease apoprotein by helping to assemble the nickel containing metallocenter of UreC. The UreE protein probably delivers the nickel.

The protein resides in the cytoplasm. Functionally, required for maturation of urease via the functional incorporation of the urease nickel metallocenter. This chain is Urease accessory protein UreD, found in Xanthobacter autotrophicus (strain ATCC BAA-1158 / Py2).